The primary structure comprises 200 residues: Probable nicotinate-nucleotide adenylyltransferase (200 aa).

The protein belongs to the NadD family.

The catalysed reaction is nicotinate beta-D-ribonucleotide + ATP + H(+) = deamido-NAD(+) + diphosphate. The protein operates within cofactor biosynthesis; NAD(+) biosynthesis; deamido-NAD(+) from nicotinate D-ribonucleotide: step 1/1. Its function is as follows. Catalyzes the reversible adenylation of nicotinate mononucleotide (NaMN) to nicotinic acid adenine dinucleotide (NaAD). This chain is Probable nicotinate-nucleotide adenylyltransferase, found in Leifsonia xyli subsp. xyli (strain CTCB07).